Reading from the N-terminus, the 435-residue chain is Protein deadpan (435 aa).

Positions 18–27 are enriched in low complexity; the sequence is GYSDSYGSNG. The disordered stretch occupies residues 18–48; sequence GYSDSYGSNGRMSNPNGLSKAELRKTNKPIM. The region spanning 40–97 is the bHLH domain; the sequence is LRKTNKPIMEKRRRARINHCLNELKSLILEAMKKDPARHTKLEKADILEMTVKHLQSV. The Orange domain occupies 116 to 149; it reads FKTGFVECAEEVNRYVSQMDGIDTGVRQRLSAHL. 2 disordered regions span residues 305–334 and 349–416; these read QLPV…AASP and STPP…DEPS. Positions 311–324 are enriched in low complexity; that stretch reads STSPPLSPISSISS. Composition is skewed to polar residues over residues 355–378 and 385–395; these read SAET…SSGC and LQQQQVSSTSG. 3 positions are modified to phosphoserine: Ser-407, Ser-408, and Ser-411. The WRPW motif motif lies at 432–435; that stretch reads WRPW.

Homodimer. Heterodimer with E(spl)mgamma-HLH and E(spl). Transcription repression requires formation of a complex with the corepressor protein Groucho. Interacts (via bHLH motif) with sisA. Interacts with da.

It localises to the nucleus. Its function is as follows. Transcriptional repressor of genes that require a bHLH protein for their transcription. In the larval brain, required to maintain the self-renewal and identity of type II neuroblasts by regulating the expression of the transcriptional repressor erm together with other self-renewal transcriptional repressors such as klu and E(spl)mgamma-HLH. As part of its role in neuroblasts development, has been shown to be a direct target of the Notch signaling pathway, however might work also independently of N/Notch. In the developing larval and pupal brain, required for mushroom body differentiation. Involved in sex determination and SXL transcription repression when in complex with the corepressor protein Groucho. The sequence is that of Protein deadpan (dpn) from Drosophila melanogaster (Fruit fly).